Reading from the N-terminus, the 1059-residue chain is Putative ATP-dependent RNA helicase BoYb (1059 aa).

A Q motif motif is present at residues 54 to 82; the sequence is RRFAEVSLLPDILETMRNLGLNRLLRLQS. The region spanning 87 to 284 is the Helicase ATP-binding domain; that stretch reads HLAGGSGHGA…RAVNDKPALV (198 aa). 100-107 is an ATP binding site; that stretch reads GSPASGRT. A DEAD box motif is present at residues 230–233; it reads DDVD. Positions 575–639 constitute a Tudor domain; sequence PPVAGAICMY…GKLFECPEAL (65 aa). The tract at residues 756–787 is disordered; the sequence is VQDSKEKANSKPHEKMKGKMTDQPAKLQSQPP. Basic and acidic residues predominate over residues 757–775; it reads QDSKEKANSKPHEKMKGKM.

The protein localises to the cytoplasm. The catalysed reaction is ATP + H2O = ADP + phosphate + H(+). Involved in primary piRNA biogenesis in germline cells. The protein is Putative ATP-dependent RNA helicase BoYb (BoYb) of Drosophila melanogaster (Fruit fly).